A 258-amino-acid chain; its full sequence is Transcription factor TT2 (258 aa).

HTH myb-type domains follow at residues 11–63 and 64–118; these read REEL…KNYL and RPGI…RKRL. DNA-binding regions (H-T-H motif) lie at residues 39-63 and 91-114; these read WSTLPNQAGLKRCGKSCRLRWKNYL and WSLIAGRLPGRTDNEIKNHWNSNL. An ATP-binding site is contributed by 47 to 54; sequence GLKRCGKS.

In terms of assembly, interacts with BHLH2/EGL3/MYC146, BHLH12/MYC1 and BHLH42/TT8. Expressed at a high level in immature siliques and at a lower level in flowers. Undetected in young seedlings, roots, leaves and inflorescence stems.

The protein resides in the nucleus. Functionally, transcription activator, when associated with BHLH2/EGL3/MYC146, BHLH12/MYC1, or BHLH42/TT8. Involved in the control of flavonoid late metabolism in developing siliques. Plays a key role in determining the tissue-specific activation of leucoanthocyanidin reductase (BANYULS). The polypeptide is Transcription factor TT2 (TT2) (Arabidopsis thaliana (Mouse-ear cress)).